The sequence spans 261 residues: 3-methyl-2-oxobutanoate hydroxymethyltransferase (261 aa).

Mg(2+) contacts are provided by Asp-42 and Asp-81. Residues 42–43 (DS), Asp-81, and Lys-110 contribute to the 3-methyl-2-oxobutanoate site. Mg(2+) is bound at residue Glu-112. Catalysis depends on Glu-179, which acts as the Proton acceptor.

This sequence belongs to the PanB family. Homodecamer; pentamer of dimers. The cofactor is Mg(2+).

It is found in the cytoplasm. It catalyses the reaction 3-methyl-2-oxobutanoate + (6R)-5,10-methylene-5,6,7,8-tetrahydrofolate + H2O = 2-dehydropantoate + (6S)-5,6,7,8-tetrahydrofolate. Its pathway is cofactor biosynthesis; (R)-pantothenate biosynthesis; (R)-pantoate from 3-methyl-2-oxobutanoate: step 1/2. Its function is as follows. Catalyzes the reversible reaction in which hydroxymethyl group from 5,10-methylenetetrahydrofolate is transferred onto alpha-ketoisovalerate to form ketopantoate. The sequence is that of 3-methyl-2-oxobutanoate hydroxymethyltransferase from Thermus thermophilus (strain ATCC 27634 / DSM 579 / HB8).